We begin with the raw amino-acid sequence, 175 residues long: Ribosome maturation factor RimM (175 aa).

The PRC barrel domain occupies 98–172; the sequence is DGEFHVRDLQ…WLLITPPKGL (75 aa).

It belongs to the RimM family. As to quaternary structure, binds ribosomal protein uS19.

The protein localises to the cytoplasm. Functionally, an accessory protein needed during the final step in the assembly of 30S ribosomal subunit, possibly for assembly of the head region. Essential for efficient processing of 16S rRNA. May be needed both before and after RbfA during the maturation of 16S rRNA. It has affinity for free ribosomal 30S subunits but not for 70S ribosomes. The protein is Ribosome maturation factor RimM of Synechococcus sp. (strain RCC307).